The primary structure comprises 550 residues: 4-coumarate--CoA ligase-like 8 (550 aa).

ATP contacts are provided by S207, S208, G209, T210, T211, and K215. Residue F253 coordinates (E)-4-coumaroyl-AMP. Residue R274 coordinates CoA. Residues 276–347 form an SBD1 region; the sequence is DLGEMMAAVE…KKYPTVDVYQ (72 aa). (E)-4-coumaroyl-AMP contacts are provided by G325, Q347, G348, and T352. Residues Q347, G348, T352, D430, and R445 each coordinate ATP. An SBD2 region spans residues 348–412; it reads GYALTESNGA…LKGPSIAKGY (65 aa). (E)-4-coumaroyl-AMP-binding residues include K447 and K451. 2 residues coordinate CoA: K453 and G454. K536 contacts ATP. Positions 548–550 match the Microbody targeting signal motif; sequence SKI.

Belongs to the ATP-dependent AMP-binding enzyme family. Requires Mg(2+) as cofactor.

Its subcellular location is the peroxisome. The catalysed reaction is (E)-4-coumarate + ATP + CoA = (E)-4-coumaroyl-CoA + AMP + diphosphate. It catalyses the reaction (E)-4-coumarate + ATP + H(+) = (E)-4-coumaroyl-AMP + diphosphate. It carries out the reaction (E)-4-coumaroyl-AMP + CoA = (E)-4-coumaroyl-CoA + AMP + H(+). Carboxylate--CoA ligase that may use 4-coumarate as substrate. Follows a two-step reaction mechanism, wherein the carboxylate substrate first undergoes adenylation by ATP, followed by a thioesterification in the presence of CoA to yield the final CoA thioester. The polypeptide is 4-coumarate--CoA ligase-like 8 (Arabidopsis thaliana (Mouse-ear cress)).